We begin with the raw amino-acid sequence, 409 residues long: Aspartic protease pepA (409 aa).

Residues 1-19 (MPSIVSLTAALTFVGAVIA) form the signal peptide. Positions 20-65 (SPVEKRSAFSVEQVPHTTYLKNGPAQKVKTLRKYGKPVPQSLLDAA) are cleaved as a propeptide — activation peptide. The Peptidase A1 domain occupies 97–404 (YLSPVTVGST…PDSPPRIGLA (308 aa)). Residues Asp-113 and Asp-293 contribute to the active site. Cys-329 and Cys-364 are oxidised to a cystine. Asn-335 carries N-linked (GlcNAc...) asparagine glycosylation.

It belongs to the peptidase A1 family. In terms of assembly, monomer.

It is found in the secreted. Functionally, secreted aspartic endopeptidase that allows assimilation of proteinaceous substrates. The scissile peptide bond is attacked by a nucleophilic water molecule activated by two aspartic residues in the active site. Shows a broad primary substrate specificity. Favors hydrophobic residues at the P1 and P1' positions. This is Aspartic protease pepA from Leptosphaeria maculans (strain JN3 / isolate v23.1.3 / race Av1-4-5-6-7-8) (Blackleg fungus).